The primary structure comprises 330 residues: LIM domain-containing protein pin-2 (330 aa).

5 consecutive LIM zinc-binding domains span residues 21–73 (CERC…CEHD), 82–132 (CAKC…CFLC), 144–194 (CNKC…CPRC), 202–255 (CFDC…CRDD), and 264–315 (CFIC…CKKC).

Expressed in neurons and intestine.

It localises to the cytoplasm. The protein resides in the nucleus. This Caenorhabditis elegans protein is LIM domain-containing protein pin-2 (pin-2).